The chain runs to 264 residues: Hemin import ATP-binding protein HmuV (264 aa).

In terms of domain architecture, ABC transporter spans 2-241 (IEVSGLSVRL…ATMLSVFGCA (240 aa)). An ATP-binding site is contributed by 34–41 (GPNGSGKT).

The protein belongs to the ABC transporter superfamily. Heme (hemin) importer (TC 3.A.1.14.5) family. In terms of assembly, the complex is composed of two ATP-binding proteins (HmuV), two transmembrane proteins (HmuU) and a solute-binding protein (HmuT).

It localises to the cell inner membrane. In terms of biological role, part of the ABC transporter complex HmuTUV involved in hemin import. Responsible for energy coupling to the transport system. The chain is Hemin import ATP-binding protein HmuV from Rhizobium etli (strain ATCC 51251 / DSM 11541 / JCM 21823 / NBRC 15573 / CFN 42).